The chain runs to 628 residues: Nuclear RNA export factor 1 (628 aa).

The tract at residues 47-83 (DTQSRYEDDDEPAVPVRASLTSASSRGRGGSSRGFGQ) is disordered. Over residues 63–72 (RASLTSASSR) the composition is skewed to low complexity. The 80-residue stretch at 100–179 (YKCRATGAAK…EFYTSKVPAP (80 aa)) folds into the RRM domain. LRR repeat units follow at residues 245–270 (NIVA…SIAK) and 271–294 (FVME…FAGL). Residues 365–526 (LVEQFVTSYF…VAVISDQLFI (162 aa)) enclose the NTF2 domain. Positions 576–628 (PIREEMIKAMCQFSGMIPPFSEKCLADCAWNFDFACQKFNEIKSSVPAEAFAH) constitute a TAP-C domain.

This sequence belongs to the NXF family. In terms of assembly, interacts with nucleoporins, Nup98, Nup153 and Nup214.

It is found in the nucleus. Involved in RNA export from the nucleus to the cytoplasm. The chain is Nuclear RNA export factor 1 (nxf-1) from Caenorhabditis elegans.